The following is a 293-amino-acid chain: Probable metal transport system membrane protein TC_0698 (293 aa).

Helical transmembrane passes span 18-38, 41-61, 68-88, 101-121, 142-162, 186-206, and 242-262; these read SLLA…YIVV, IVSI…IALW, LPIS…ICIG, IISM…SKLP, DLYF…ICHT, FLLL…MGVI, and FLGI…IAIL.

It belongs to the ABC-3 integral membrane protein family.

The protein localises to the cell inner membrane. Part of an ATP-driven transport system TC_0696/TC_0697/TC_0698 for a metal. In Chlamydia muridarum (strain MoPn / Nigg), this protein is Probable metal transport system membrane protein TC_0698.